A 211-amino-acid polypeptide reads, in one-letter code: Probable superoxide dismutase [Mn], mitochondrial (211 aa).

Mn(2+) contacts are provided by histidine 36, histidine 84, aspartate 173, and histidine 177.

The protein belongs to the iron/manganese superoxide dismutase family. Homotetramer. It depends on Mn(2+) as a cofactor.

The protein resides in the mitochondrion matrix. The enzyme catalyses 2 superoxide + 2 H(+) = H2O2 + O2. Destroys superoxide anion radicals which are normally produced within the cells and which are toxic to biological systems. This chain is Probable superoxide dismutase [Mn], mitochondrial, found in Debaryomyces hansenii (strain ATCC 36239 / CBS 767 / BCRC 21394 / JCM 1990 / NBRC 0083 / IGC 2968) (Yeast).